The sequence spans 226 residues: Elongation factor 1-delta (226 aa).

The interval 82-131 (SSVATPPVADTKASAAEDDDDDDVDLFGEETEEEKKASEERAAAVKASGK) is disordered. The span at 97–113 (AEDDDDDDVDLFGEETE) shows a compositional bias: acidic residues. Over residues 114 to 124 (EEKKASEERAA) the composition is skewed to basic and acidic residues.

This sequence belongs to the EF-1-beta/EF-1-delta family. EF-1 is composed of 4 subunits: alpha, beta (1B-alpha=beta'), delta (1B-beta), and gamma (1B-gamma).

In terms of biological role, EF-1-beta and EF-1-beta' stimulate the exchange of GDP bound to EF-1-alpha to GTP. The chain is Elongation factor 1-delta from Spuriopimpinella brachycarpa (Chamnamul).